We begin with the raw amino-acid sequence, 241 residues long: Small ribosomal subunit protein uS2 (241 aa).

Belongs to the universal ribosomal protein uS2 family.

This Salmonella choleraesuis (strain SC-B67) protein is Small ribosomal subunit protein uS2.